The primary structure comprises 783 residues: Putative ATP-dependent DNA helicase fml2 (783 aa).

The region spanning 118–286 (FCEQALFHNL…KVVDCLHISK (169 aa)) is the Helicase ATP-binding domain. 131-138 (LPTGLGKT) is an ATP binding site. The short motif at 234–237 (DEAH) is the DEAH box element. The 170-residue stretch at 450–619 (KMNHLLELLK…GKKIALKKDV (170 aa)) folds into the Helicase C-terminal domain.

The protein belongs to the DEAD box helicase family. DEAH subfamily. FANCM sub-subfamily.

It localises to the nucleus. The protein resides in the nucleolus. It carries out the reaction ATP + H2O = ADP + phosphate + H(+). The protein is Putative ATP-dependent DNA helicase fml2 of Schizosaccharomyces pombe (strain 972 / ATCC 24843) (Fission yeast).